The following is a 497-amino-acid chain: MAAATAPQGWQWGEPRALGRAVKLLQRLEEQCRDLRLFVGPPSLRDLLPRTAQLLREVAKARSDKTRGDPEGPGGAGDFLVIYLTNLEAKGRQVAELLPHRGKKDANQDVFPEGSRFRRQLAKLALIFSHMHAELSALFPEGKYCGHLYQITKGSANTFWRENCGVRCVLPWAEFQSLLCSCHPVEPGPIMQALRSTLDLTCSGHVSVFEFDIFTRLFQPWPTLLKNWQLLAVNHPGYMAFLTYDEVQTRLQAYRDKPGSYIFRPSCTRLGQWAIGYVSSNGSILQTIPLNKPLLQVLLKGQKDGIFLYPDGKNHNPDLTELCRAVLNQCIQVSQEQLQLYQAMNSTFELCKICTERDKDVRIEPCGHLLCSCCLAAWQHSDSQTCPFCRCEIKGREAVSICQAQERSMEVRTTAGDSGDNCHQEAAEWKLESVTPSAPPLPPEVPCPQRPQNKGWLTLAPFTLPRLRPPLPLPKMASVLWEVTSRPQVREGATESS.

Residues 7–145 (PQGWQWGEPR…SALFPEGKYC (139 aa)) form a 4H region. A Cbl-PTB domain is found at 7 to 321 (PQGWQWGEPR…GKNHNPDLTE (315 aa)). An EF-hand-like region spans residues 146 to 218 (GHLYQITKGS…FEFDIFTRLF (73 aa)). Residues aspartate 199, threonine 201, and glutamate 210 each coordinate Ca(2+). Positions 219–321 (QPWPTLLKNW…GKNHNPDLTE (103 aa)) are SH2-like. Arginine 264 is a binding site for 4-O-phospho-L-tyrosine. Positions 322–350 (LCRAVLNQCIQVSQEQLQLYQAMNSTFEL) are linker. Tyrosine 341 bears the Phosphotyrosine; by SRC mark. Residues 351-390 (CKICTERDKDVRIEPCGHLLCSCCLAAWQHSDSQTCPFCR) form an RING-type zinc finger. Residues 351–497 (CKICTERDKD…QVREGATESS (147 aa)) are interaction with RET.

As to quaternary structure, interacts with Ubiquitin-conjugating enzyme E2 UBE2D2 and UBE2D3. Interacts with EGFR (tyrosine phosphorylated). Interacts with the SH3 domain proteins LYN and CRK. Interacts (via RING-type zinc finger) with TGFB1I1 (via LIM zinc-binding domain 2); the interaction is direct and enhances the E3 activity. Interacts directly with RET (inactive) and CD2AP; dissociates from RET upon RET activation by GDNF which also increases the interaction with CD2AP suggesting dissociation as CBLC:CD2AP complex. Interacts with SRC; the interaction is enhanced when SRC is phosphorylated at 'Tyr-419'. Phosphorylated on multiple tyrosine residues by SRC. In terms of processing, autoubiquitinated, when phosphorylated at Tyr-341.

It carries out the reaction S-ubiquitinyl-[E2 ubiquitin-conjugating enzyme]-L-cysteine + [acceptor protein]-L-lysine = [E2 ubiquitin-conjugating enzyme]-L-cysteine + N(6)-ubiquitinyl-[acceptor protein]-L-lysine.. Its activity is regulated as follows. Phosphorylation at Tyr-341 is necessary and sufficient for the activation of E3 activity. Its function is as follows. Acts as an E3 ubiquitin-protein ligase, which accepts ubiquitin from specific E2 ubiquitin-conjugating enzymes, and then transfers it to substrates promoting their degradation by the proteasome. Functionally coupled with the E2 ubiquitin-protein ligases UB2D1, UB2D2 and UB2D3. Regulator of EGFR mediated signal transduction; upon EGF activation, ubiquitinates EGFR. Inhibits EGF stimulated MAPK1 activation. Promotes ubiquitination of SRC phosphorylated at 'Tyr-419', has the highest ubiquitin ligase activity among CBL family proteins. In collaboration with CD2AP may act as regulatory checkpoint for Ret signaling by modulating the rate of RET degradation after ligand activation; CD2AP converts it from an inhibitor to a promoter of RET degradation; the function limits the potency of GDNF on neuronal survival. This is E3 ubiquitin-protein ligase CBL-C (Cblc) from Rattus norvegicus (Rat).